We begin with the raw amino-acid sequence, 885 residues long: Alanine--tRNA ligase (885 aa).

4 residues coordinate Zn(2+): histidine 564, histidine 568, cysteine 676, and histidine 680.

It belongs to the class-II aminoacyl-tRNA synthetase family. It depends on Zn(2+) as a cofactor.

The protein localises to the cytoplasm. It carries out the reaction tRNA(Ala) + L-alanine + ATP = L-alanyl-tRNA(Ala) + AMP + diphosphate. In terms of biological role, catalyzes the attachment of alanine to tRNA(Ala) in a two-step reaction: alanine is first activated by ATP to form Ala-AMP and then transferred to the acceptor end of tRNA(Ala). Also edits incorrectly charged Ser-tRNA(Ala) and Gly-tRNA(Ala) via its editing domain. This chain is Alanine--tRNA ligase, found in Brucella abortus (strain 2308).